The chain runs to 159 residues: Endoribonuclease YbeY (159 aa).

Zn(2+) contacts are provided by H126, H130, and H136.

This sequence belongs to the endoribonuclease YbeY family. It depends on Zn(2+) as a cofactor.

Its subcellular location is the cytoplasm. In terms of biological role, single strand-specific metallo-endoribonuclease involved in late-stage 70S ribosome quality control and in maturation of the 3' terminus of the 16S rRNA. The chain is Endoribonuclease YbeY from Thermodesulfovibrio yellowstonii (strain ATCC 51303 / DSM 11347 / YP87).